We begin with the raw amino-acid sequence, 327 residues long: 4-hydroxy-2-oxoglutarate aldolase, mitochondrial (327 aa).

The N-terminal 25 residues, 1-25 (MLGPQVWSSVRQGLSRSLSRNVGVW), are a transit peptide targeting the mitochondrion. Residue 77–78 (SN) coordinates substrate. Lys-196 functions as the Schiff-base intermediate with substrate in the catalytic mechanism. Residues Ser-198 and Gly-222 each contribute to the substrate site.

The protein belongs to the DapA family. In terms of assembly, homotetramer.

Its subcellular location is the mitochondrion. It catalyses the reaction (4S)-4-hydroxy-2-oxoglutarate = glyoxylate + pyruvate. The enzyme catalyses (4R)-4-hydroxy-2-oxoglutarate = glyoxylate + pyruvate. Inhibited by divalent cations. Its function is as follows. Catalyzes the final step in the metabolic pathway of hydroxyproline. This is 4-hydroxy-2-oxoglutarate aldolase, mitochondrial (HOGA1) from Homo sapiens (Human).